Consider the following 218-residue polypeptide: UPF0758 protein SAUSA300_1608 (218 aa).

In terms of domain architecture, MPN spans 92–214 (KITQPSDVAD…FTSLVEAGYF (123 aa)). Zn(2+)-binding residues include histidine 163, histidine 165, and aspartate 176. The short motif at 163 to 176 (HNHPSGDVTPSQED) is the JAMM motif element.

This sequence belongs to the UPF0758 family.

This Staphylococcus aureus (strain USA300) protein is UPF0758 protein SAUSA300_1608.